A 233-amino-acid polypeptide reads, in one-letter code: MKVGIIGAMEEEVTLLRDRIENRQTLARAGCEIYTGQLNGIDVALLKSGIGKVAAAMGTTLLLEHCQPDLVINTGSAGGLDSSLKVGDIVVSNEVRYHDADVTAFGYEPGQMAGCPAAFVADEDLIALAENCIQQLKLNAVRGLICSGDAFINGAEPLTRIRAAFPTVAAVEMEAAAIGHVCYLFNTPFVVVRAISDVADQASHLSFEEFLVVAAKQSTLMIKAMLTTLAQRG.

E12 acts as the Proton acceptor in catalysis. Residues G78, I152, and 173 to 174 (ME) contribute to the substrate site. D197 functions as the Proton donor in the catalytic mechanism.

This sequence belongs to the PNP/UDP phosphorylase family. MtnN subfamily. Homodimer.

The enzyme catalyses S-adenosyl-L-homocysteine + H2O = S-(5-deoxy-D-ribos-5-yl)-L-homocysteine + adenine. It catalyses the reaction S-methyl-5'-thioadenosine + H2O = 5-(methylsulfanyl)-D-ribose + adenine. It carries out the reaction 5'-deoxyadenosine + H2O = 5-deoxy-D-ribose + adenine. It functions in the pathway amino-acid biosynthesis; L-methionine biosynthesis via salvage pathway; S-methyl-5-thio-alpha-D-ribose 1-phosphate from S-methyl-5'-thioadenosine (hydrolase route): step 1/2. Catalyzes the irreversible cleavage of the glycosidic bond in both 5'-methylthioadenosine (MTA) and S-adenosylhomocysteine (SAH/AdoHcy) to adenine and the corresponding thioribose, 5'-methylthioribose and S-ribosylhomocysteine, respectively. Also cleaves 5'-deoxyadenosine, a toxic by-product of radical S-adenosylmethionine (SAM) enzymes, into 5-deoxyribose and adenine. Thus, is required for in vivo function of the radical SAM enzymes biotin synthase and lipoic acid synthase, that are inhibited by 5'-deoxyadenosine accumulation. This Yersinia pestis bv. Antiqua (strain Antiqua) protein is 5'-methylthioadenosine/S-adenosylhomocysteine nucleosidase.